Reading from the N-terminus, the 191-residue chain is UPF0149 protein VC_2476 (191 aa).

The protein belongs to the UPF0149 family.

This is UPF0149 protein VC_2476 from Vibrio cholerae serotype O1 (strain ATCC 39315 / El Tor Inaba N16961).